The chain runs to 369 residues: Transmembrane protein adipocyte-associated 1 (369 aa).

Asn20 carries N-linked (GlcNAc...) asparagine glycosylation. 7 consecutive transmembrane segments (helical) span residues 45 to 65 (LLLL…LPLA), 73 to 93 (SSPI…VGIA), 120 to 140 (FFLL…GHLE), 148 to 168 (VLAI…TLEI), 189 to 209 (QFWL…VILP), 237 to 257 (LLQG…LCCV), and 262 to 282 (FLYF…GFFG). Asn329 is a glycosylation site (N-linked (GlcNAc...) asparagine).

The protein belongs to the UPF0359 family. Ubiquitous, with higher levels in heart, brain, lung, liver and kidney.

It localises to the membrane. The polypeptide is Transmembrane protein adipocyte-associated 1 (Tpra1) (Mus musculus (Mouse)).